A 202-amino-acid polypeptide reads, in one-letter code: 7-cyano-7-deazaguanine synthase 1 (202 aa).

7 to 17 (MSGGLDSSSAA) is a binding site for ATP. Positions 166, 174, 177, and 180 each coordinate Zn(2+).

It belongs to the QueC family. Zn(2+) serves as cofactor.

The catalysed reaction is 7-carboxy-7-deazaguanine + NH4(+) + ATP = 7-cyano-7-deazaguanine + ADP + phosphate + H2O + H(+). It functions in the pathway purine metabolism; 7-cyano-7-deazaguanine biosynthesis. Its function is as follows. Catalyzes the ATP-dependent conversion of 7-carboxy-7-deazaguanine (CDG) to 7-cyano-7-deazaguanine (preQ(0)). This Sulfurisphaera tokodaii (strain DSM 16993 / JCM 10545 / NBRC 100140 / 7) (Sulfolobus tokodaii) protein is 7-cyano-7-deazaguanine synthase 1 (queC1).